We begin with the raw amino-acid sequence, 248 residues long: Small ribosomal subunit protein eS6 (248 aa).

The disordered stretch occupies residues valine 215–lysine 248. Residues alanine 223–lysine 248 show a composition bias toward basic and acidic residues. A phosphoserine mark is found at serine 233, serine 235, serine 239, serine 242, serine 244, and serine 245.

It belongs to the eukaryotic ribosomal protein eS6 family. As to quaternary structure, component of the small ribosomal subunit. Part of the small subunit (SSU) processome, composed of more than 70 proteins and the RNA chaperone small nucleolar RNA (snoRNA) U3. Post-translationally, ribosomal protein S6 is the major substrate of protein kinases in eukaryote ribosomes. The phosphorylation is stimulated by growth factors, tumor promoting agents, and mitogens. It is dephosphorylated at growth arrest.

It localises to the cytoplasm. Its subcellular location is the nucleus. It is found in the nucleolus. Functionally, component of the 40S small ribosomal subunit. Plays an important role in controlling cell growth and proliferation through the selective translation of particular classes of mRNA. Part of the small subunit (SSU) processome, first precursor of the small eukaryotic ribosomal subunit. During the assembly of the SSU processome in the nucleolus, many ribosome biogenesis factors, an RNA chaperone and ribosomal proteins associate with the nascent pre-rRNA and work in concert to generate RNA folding, modifications, rearrangements and cleavage as well as targeted degradation of pre-ribosomal RNA by the RNA exosome. The sequence is that of Small ribosomal subunit protein eS6 (RpS6) from Drosophila melanogaster (Fruit fly).